A 368-amino-acid chain; its full sequence is snRNA-activating protein complex subunit 1 (368 aa).

Positions 1–168 are SNAPC3-binding; that stretch reads MGTPPGLQTD…EEFKDPSDRV (168 aa). Positions 164–268 are SNAPC4-binding; that stretch reads PSDRVMKLIT…AESLAKIKSK (105 aa). Disordered stretches follow at residues 224-257 and 275-368; these read QQWH…ERCE and QASK…RRKH. Residues 238–257 show a composition bias toward basic and acidic residues; the sequence is KTNDGEEKMEGNSQETERCE. Phosphoserine occurs at positions 289 and 290.

As to quaternary structure, part of the SNAPc complex composed of 5 subunits: SNAPC1, SNAPC2, SNAPC3, SNAPC4 and SNAPC5. SNAPC1 interacts with SNAPC3, SNAPC4 and TBP.

The protein localises to the nucleus. Functionally, part of the SNAPc complex required for the transcription of both RNA polymerase II and III small-nuclear RNA genes. Binds to the proximal sequence element (PSE), a non-TATA-box basal promoter element common to these 2 types of genes. Recruits TBP and BRF2 to the U6 snRNA TATA box. This is snRNA-activating protein complex subunit 1 (SNAPC1) from Homo sapiens (Human).